Here is a 459-residue protein sequence, read N- to C-terminus: Ribulose bisphosphate carboxylase large chain (459 aa).

Lys-4 carries the N6,N6,N6-trimethyllysine modification. Residues Asn-113 and Thr-163 each contribute to the substrate site. Residue Lys-165 is the Proton acceptor of the active site. Lys-167 is a binding site for substrate. Lys-191, Asp-193, and Glu-194 together coordinate Mg(2+). Residue Lys-191 is modified to N6-carboxylysine. Residue His-284 is the Proton acceptor of the active site. Residues Arg-285, His-317, and Ser-369 each coordinate substrate.

It belongs to the RuBisCO large chain family. Type I subfamily. As to quaternary structure, heterohexadecamer of 8 large chains and 8 small chains; disulfide-linked. The disulfide link is formed within the large subunit homodimers. It depends on Mg(2+) as a cofactor. Post-translationally, the disulfide bond which can form in the large chain dimeric partners within the hexadecamer appears to be associated with oxidative stress and protein turnover.

The protein resides in the plastid. The protein localises to the chloroplast. It catalyses the reaction 2 (2R)-3-phosphoglycerate + 2 H(+) = D-ribulose 1,5-bisphosphate + CO2 + H2O. The catalysed reaction is D-ribulose 1,5-bisphosphate + O2 = 2-phosphoglycolate + (2R)-3-phosphoglycerate + 2 H(+). Functionally, ruBisCO catalyzes two reactions: the carboxylation of D-ribulose 1,5-bisphosphate, the primary event in carbon dioxide fixation, as well as the oxidative fragmentation of the pentose substrate in the photorespiration process. Both reactions occur simultaneously and in competition at the same active site. The sequence is that of Ribulose bisphosphate carboxylase large chain from Ceratopetalum gummiferum (New South Wales Christmas bush).